The sequence spans 517 residues: Crotonobetaine/carnitine--CoA ligase (517 aa).

It belongs to the ATP-dependent AMP-binding enzyme family.

The catalysed reaction is 4-(trimethylamino)butanoate + ATP + CoA = 4-(trimethylamino)butanoyl-CoA + AMP + diphosphate. It catalyses the reaction crotonobetaine + ATP + CoA = crotonobetainyl-CoA + AMP + diphosphate. The enzyme catalyses (R)-carnitine + ATP + CoA = (R)-carnitinyl-CoA + AMP + diphosphate. Its pathway is amine and polyamine metabolism; carnitine metabolism. Catalyzes the transfer of CoA to carnitine, generating the initial carnitinyl-CoA needed for the CaiB reaction cycle. Also has activity toward crotonobetaine and gamma-butyrobetaine. This chain is Crotonobetaine/carnitine--CoA ligase, found in Escherichia coli (strain SE11).